Consider the following 123-residue polypeptide: uncharacterized protein (123 aa).

The interval 35–100 (SQDHGDDPAE…SSGAPASQHC (66 aa)) is disordered. Positions 37–48 (DHGDDPAERGRT) are enriched in basic and acidic residues. Residues 85 to 97 (ALPASPSSGAPAS) show a composition bias toward low complexity.

This is an uncharacterized protein from Homo sapiens (Human).